The sequence spans 192 residues: Imidazoleglycerol-phosphate dehydratase (192 aa).

This sequence belongs to the imidazoleglycerol-phosphate dehydratase family.

Its subcellular location is the cytoplasm. The enzyme catalyses D-erythro-1-(imidazol-4-yl)glycerol 3-phosphate = 3-(imidazol-4-yl)-2-oxopropyl phosphate + H2O. It participates in amino-acid biosynthesis; L-histidine biosynthesis; L-histidine from 5-phospho-alpha-D-ribose 1-diphosphate: step 6/9. This is Imidazoleglycerol-phosphate dehydratase from Carboxydothermus hydrogenoformans (strain ATCC BAA-161 / DSM 6008 / Z-2901).